Consider the following 308-residue polypeptide: MLKVAFQMDEDVVVGRDVSVKLVEEAQRRGHEVFFYRPTSLAFVCGELVAEAFSVRVGADSLHFHDKTRLPLGKLDMLFVRQNPPFDMRYVTTTYLLERLDILMINNPKAIRDHPEKLLPLSFPKFIPPTLITESVSEISAFYAEYGDIVLKPLYDYGGNGVCRICGRADVGAISSAMVERYEAPLVAQQFIDDISSDKRVVLLGGRPIGAVRRKVTAMGEIRTNLRVGATPEATELSDREREICHDVGMLLSSVDILFAGIDILGGHLIEVNVTSPCGILEINQVYGKTLERDCWDYFEYALLHRSP.

An ATP-grasp domain is found at 117-300 (KLLPLSFPKF…LERDCWDYFE (184 aa)). 143–198 (YAEYGDIVLKPLYDYGGNGVCRICGRADVGAISSAMVERYEAPLVAQQFIDDISSD) contributes to the ATP binding site. Mg(2+)-binding residues include Glu-271 and Asn-273.

The protein belongs to the prokaryotic GSH synthase family. The cofactor is Mg(2+). Mn(2+) is required as a cofactor.

The enzyme catalyses gamma-L-glutamyl-L-cysteine + glycine + ATP = glutathione + ADP + phosphate + H(+). It functions in the pathway sulfur metabolism; glutathione biosynthesis; glutathione from L-cysteine and L-glutamate: step 2/2. The polypeptide is Glutathione synthetase (Anaplasma centrale).